The primary structure comprises 147 residues: Small ribosomal subunit protein uS12 (147 aa).

Belongs to the universal ribosomal protein uS12 family. In terms of assembly, part of the 30S ribosomal subunit.

With S4 and S5 plays an important role in translational accuracy. Located at the interface of the 30S and 50S subunits. The chain is Small ribosomal subunit protein uS12 from Methanococcus aeolicus (strain ATCC BAA-1280 / DSM 17508 / OCM 812 / Nankai-3).